A 379-amino-acid chain; its full sequence is Cytochrome b (379 aa).

A run of 4 helical transmembrane segments spans residues 33–53 (FGSL…FLAM), 77–98 (WILR…YIHV), 113–133 (WNIG…GYVL), and 178–198 (FFAF…VHLL). Heme b is bound by residues histidine 83 and histidine 97. Heme b-binding residues include histidine 182 and histidine 196. Histidine 201 lines the a ubiquinone pocket. The next 4 helical transmembrane spans lie at 226–246 (IKDI…VLFS), 288–308 (LGGV…PVLH), 320–340 (LSQC…WIGG), and 347–367 (YVIX…XXXX).

This sequence belongs to the cytochrome b family. As to quaternary structure, the cytochrome bc1 complex contains 11 subunits: 3 respiratory subunits (MT-CYB, CYC1 and UQCRFS1), 2 core proteins (UQCRC1 and UQCRC2) and 6 low-molecular weight proteins (UQCRH/QCR6, UQCRB/QCR7, UQCRQ/QCR8, UQCR10/QCR9, UQCR11/QCR10 and a cleavage product of UQCRFS1). This cytochrome bc1 complex then forms a dimer. Heme b is required as a cofactor.

The protein localises to the mitochondrion inner membrane. Component of the ubiquinol-cytochrome c reductase complex (complex III or cytochrome b-c1 complex) that is part of the mitochondrial respiratory chain. The b-c1 complex mediates electron transfer from ubiquinol to cytochrome c. Contributes to the generation of a proton gradient across the mitochondrial membrane that is then used for ATP synthesis. This is Cytochrome b (MT-CYB) from Myotis goudotii (Malagasy mouse-eared bat).